A 296-amino-acid polypeptide reads, in one-letter code: Glycine N-acyltransferase (296 aa).

Lys16 bears the N6-acetyllysine; alternate mark. The residue at position 16 (Lys16) is an N6-succinyllysine; alternate. N6-acetyllysine is present on Lys113. N6-acetyllysine; alternate occurs at positions 127, 141, and 142. Residues Lys127, Lys141, and Lys142 each carry the N6-succinyllysine; alternate modification. Lys159 and Lys167 each carry N6-acetyllysine. Lys169 carries the N6-succinyllysine modification. Lys183 and Lys256 each carry N6-acetyllysine; alternate. 2 positions are modified to N6-succinyllysine; alternate: Lys183 and Lys256. Position 267 is an N6-succinyllysine (Lys267).

Belongs to the glycine N-acyltransferase family.

The protein localises to the mitochondrion. The enzyme catalyses an acyl-CoA + glycine = an N-acylglycine + CoA + H(+). It carries out the reaction benzoyl-CoA + glycine = N-benzoylglycine + CoA + H(+). Its function is as follows. Mitochondrial acyltransferase which transfers an acyl group to the N-terminus of glycine and glutamine, although much less efficiently. Can conjugate a multitude of substrates to form a variety of N-acylglycines, thereby detoxify xenobiotics, such as benzoic acid or salicylic acid, and endogenous organic acids, such as isovaleric acid. This Mus musculus (Mouse) protein is Glycine N-acyltransferase (Glyat).